The following is a 154-amino-acid chain: MTTLYVDADACPVRAEAERVATRHRLRMAVVSNGGLRPSQNPLVETVIVPDGPDVADQWIAERAGRGDVVITADIPLAAKCVEAGARVLRHNGEAFTPANIGQQLAMRDLMADLRAANPLGAGGGGKPFSKADRARFLDALEREIRAAQRDAQG.

The protein belongs to the UPF0178 family.

In Ruegeria pomeroyi (strain ATCC 700808 / DSM 15171 / DSS-3) (Silicibacter pomeroyi), this protein is UPF0178 protein SPO3827.